The sequence spans 265 residues: Glutamate racemase (265 aa).

Residues 12-13 (DS) and 44-45 (YG) each bind substrate. Cys-75 functions as the Proton donor/acceptor in the catalytic mechanism. 76–77 (NT) provides a ligand contact to substrate. Residue Cys-186 is the Proton donor/acceptor of the active site. 187 to 188 (TH) is a binding site for substrate.

The protein belongs to the aspartate/glutamate racemases family.

The catalysed reaction is L-glutamate = D-glutamate. It participates in cell wall biogenesis; peptidoglycan biosynthesis. Provides the (R)-glutamate required for cell wall biosynthesis. The protein is Glutamate racemase of Pseudomonas putida (strain W619).